The following is a 451-amino-acid chain: NADH-quinone oxidoreductase subunit D (451 aa).

It belongs to the complex I 49 kDa subunit family. In terms of assembly, NDH-1 is composed of 14 different subunits. Subunits NuoB, C, D, E, F, and G constitute the peripheral sector of the complex.

It is found in the cell inner membrane. It carries out the reaction a quinone + NADH + 5 H(+)(in) = a quinol + NAD(+) + 4 H(+)(out). Its function is as follows. NDH-1 shuttles electrons from NADH, via FMN and iron-sulfur (Fe-S) centers, to quinones in the respiratory chain. The immediate electron acceptor for the enzyme in this species is believed to be a menaquinone. Couples the redox reaction to proton translocation (for every two electrons transferred, four hydrogen ions are translocated across the cytoplasmic membrane), and thus conserves the redox energy in a proton gradient. This is NADH-quinone oxidoreductase subunit D from Salinibacter ruber (strain DSM 13855 / M31).